The sequence spans 344 residues: Glutamine synthetase (344 aa).

In terms of domain architecture, GS beta-grasp spans tyrosine 4–glycine 86. The 256-residue stretch at proline 89–alanine 344 folds into the GS catalytic domain. Glutamate 109 and glutamate 111 together coordinate Mg(2+). Glutamate 167 lines the ATP pocket. Residues glutamate 172 and glutamate 179 each contribute to the Mg(2+) site. Glutamate 278 is an L-glutamate binding site.

Belongs to the glutamine synthetase family. In terms of assembly, homooctamer and homotetramer. It depends on Mg(2+) as a cofactor.

The protein resides in the cytoplasm. It carries out the reaction L-glutamate + NH4(+) + ATP = L-glutamine + ADP + phosphate + H(+). Its function is as follows. Catalyzes the ATP-dependent biosynthesis of glutamine from glutamate and ammonia. This Bradyrhizobium diazoefficiens (strain JCM 10833 / BCRC 13528 / IAM 13628 / NBRC 14792 / USDA 110) protein is Glutamine synthetase.